A 501-amino-acid chain; its full sequence is Aspartyl/glutamyl-tRNA(Asn/Gln) amidotransferase subunit B (501 aa).

The protein belongs to the GatB/GatE family. GatB subfamily. Heterotrimer of A, B and C subunits.

It catalyses the reaction L-glutamyl-tRNA(Gln) + L-glutamine + ATP + H2O = L-glutaminyl-tRNA(Gln) + L-glutamate + ADP + phosphate + H(+). The enzyme catalyses L-aspartyl-tRNA(Asn) + L-glutamine + ATP + H2O = L-asparaginyl-tRNA(Asn) + L-glutamate + ADP + phosphate + 2 H(+). Allows the formation of correctly charged Asn-tRNA(Asn) or Gln-tRNA(Gln) through the transamidation of misacylated Asp-tRNA(Asn) or Glu-tRNA(Gln) in organisms which lack either or both of asparaginyl-tRNA or glutaminyl-tRNA synthetases. The reaction takes place in the presence of glutamine and ATP through an activated phospho-Asp-tRNA(Asn) or phospho-Glu-tRNA(Gln). This is Aspartyl/glutamyl-tRNA(Asn/Gln) amidotransferase subunit B from Mycobacterium sp. (strain KMS).